We begin with the raw amino-acid sequence, 512 residues long: Cytochrome P450 1A1 (512 aa).

A mitochondrial targeting signal region spans residues 29 to 40 (SRPRVPKGLKNP). O-linked (GlcNAc) serine glycosylation is present at Ser67. Phe224 is a substrate binding site. Residue Cys457 participates in heme binding.

The protein belongs to the cytochrome P450 family. Interacts with cytosolic chaperones HSP70 and HSP90; this interaction is required for initial targeting to mitochondria. Interacts (via mitochondrial targeting signal) with TOMM40 (via N-terminus); this interaction is required for translocation across the mitochondrial outer membrane. It depends on heme as a cofactor.

The protein resides in the endoplasmic reticulum membrane. It localises to the mitochondrion inner membrane. It is found in the microsome membrane. The protein localises to the cytoplasm. It carries out the reaction an organic molecule + reduced [NADPH--hemoprotein reductase] + O2 = an alcohol + oxidized [NADPH--hemoprotein reductase] + H2O + H(+). The enzyme catalyses estrone + reduced [NADPH--hemoprotein reductase] + O2 = 2-hydroxyestrone + oxidized [NADPH--hemoprotein reductase] + H2O + H(+). It catalyses the reaction estrone + reduced [NADPH--hemoprotein reductase] + O2 = 4-hydroxyestrone + oxidized [NADPH--hemoprotein reductase] + H2O + H(+). The catalysed reaction is estrone + reduced [NADPH--hemoprotein reductase] + O2 = 6alpha-hydroxyestrone + oxidized [NADPH--hemoprotein reductase] + H2O + H(+). It carries out the reaction estrone + reduced [NADPH--hemoprotein reductase] + O2 = 15alpha-hydroxyestrone + oxidized [NADPH--hemoprotein reductase] + H2O + H(+). The enzyme catalyses estrone + reduced [NADPH--hemoprotein reductase] + O2 = 16alpha-hydroxyestrone + oxidized [NADPH--hemoprotein reductase] + H2O + H(+). It catalyses the reaction 17beta-estradiol + reduced [NADPH--hemoprotein reductase] + O2 = 2-hydroxy-17beta-estradiol + oxidized [NADPH--hemoprotein reductase] + H2O + H(+). The catalysed reaction is 17beta-estradiol + reduced [NADPH--hemoprotein reductase] + O2 = 4-hydroxy-17beta-estradiol + oxidized [NADPH--hemoprotein reductase] + H2O + H(+). It carries out the reaction 17beta-estradiol + reduced [NADPH--hemoprotein reductase] + O2 = 6alpha-hydroxy-17beta-estradiol + oxidized [NADPH--hemoprotein reductase] + H2O + H(+). The enzyme catalyses 17beta-estradiol + reduced [NADPH--hemoprotein reductase] + O2 = 7alpha-hydroxy-17beta-estradiol + oxidized [NADPH--hemoprotein reductase] + H2O + H(+). It catalyses the reaction 17beta-estradiol + reduced [NADPH--hemoprotein reductase] + O2 = 15alpha-hydroxy-17beta-estradiol + oxidized [NADPH--hemoprotein reductase] + H2O + H(+). The catalysed reaction is (5Z,8Z,11Z)-eicosatrienoate + reduced [NADPH--hemoprotein reductase] + O2 = 19-hydroxy-(5Z,8Z,11Z)-eicosatrienoate + oxidized [NADPH--hemoprotein reductase] + H2O + H(+). It carries out the reaction (5Z,8Z,11Z,14Z)-eicosatetraenoate + reduced [NADPH--hemoprotein reductase] + O2 = 16-hydroxy-(5Z,8Z,11Z,14Z)-eicosatetraenoate + oxidized [NADPH--hemoprotein reductase] + H2O + H(+). The enzyme catalyses (5Z,8Z,11Z,14Z)-eicosatetraenoate + reduced [NADPH--hemoprotein reductase] + O2 = 17-hydroxy-(5Z,8Z,11Z,14Z)-eicosatetraenoate + oxidized [NADPH--hemoprotein reductase] + H2O + H(+). It catalyses the reaction (5Z,8Z,11Z,14Z)-eicosatetraenoate + reduced [NADPH--hemoprotein reductase] + O2 = 18-hydroxy-(5Z,8Z,11Z,14Z)-eicosatetraenoate + oxidized [NADPH--hemoprotein reductase] + H2O + H(+). The catalysed reaction is (5Z,8Z,11Z,14Z)-eicosatetraenoate + reduced [NADPH--hemoprotein reductase] + O2 = 19-hydroxy-(5Z,8Z,11Z,14Z)-eicosatetraenoate + oxidized [NADPH--hemoprotein reductase] + H2O + H(+). It carries out the reaction (5Z,8Z,11Z,14Z,17Z)-eicosapentaenoate + reduced [NADPH--hemoprotein reductase] + O2 = 19-hydroxy-(5Z,8Z,11Z,14Z,17Z)-eicosapentaenoate + oxidized [NADPH--hemoprotein reductase] + H2O + H(+). The enzyme catalyses (5Z,8Z,11Z,14Z)-eicosatetraenoate + reduced [NADPH--hemoprotein reductase] + O2 = (8R,9S)-epoxy-(5Z,11Z,14Z)-eicosatrienoate + oxidized [NADPH--hemoprotein reductase] + H2O + H(+). It catalyses the reaction (5Z,8Z,11Z,14Z)-eicosatetraenoate + reduced [NADPH--hemoprotein reductase] + O2 = (11R,12S)-epoxy-(5Z,8Z,14Z)-eicosatrienoate + oxidized [NADPH--hemoprotein reductase] + H2O + H(+). The catalysed reaction is (5Z,8Z,11Z,14Z)-eicosatetraenoate + reduced [NADPH--hemoprotein reductase] + O2 = (14S,15R)-epoxy-(5Z,8Z,11Z)-eicosatrienoate + oxidized [NADPH--hemoprotein reductase] + H2O + H(+). It carries out the reaction (5Z,8Z,11Z,14Z)-eicosatetraenoate + reduced [NADPH--hemoprotein reductase] + O2 = (14R,15S)-epoxy-(5Z,8Z,11Z)-eicosatrienoate + oxidized [NADPH--hemoprotein reductase] + H2O + H(+). The enzyme catalyses (5Z,8Z,11Z,14Z,17Z)-eicosapentaenoate + reduced [NADPH--hemoprotein reductase] + O2 = (17R,18S)-epoxy-(5Z,8Z,11Z,14Z)-eicosatetraenoate + oxidized [NADPH--hemoprotein reductase] + H2O + H(+). It catalyses the reaction (4Z,7Z,10Z,13Z,16Z,19Z)-docosahexaenoate + reduced [NADPH--hemoprotein reductase] + O2 = (19S,20R)-epoxy-(4Z,7Z,10Z,13Z,16Z)-docosapentaenoate + oxidized [NADPH--hemoprotein reductase] + H2O + H(+). The catalysed reaction is (4Z,7Z,10Z,13Z,16Z,19Z)-docosahexaenoate + reduced [NADPH--hemoprotein reductase] + O2 = (19R,20S)-epoxy-(4Z,7Z,10Z,13Z,16Z)-docosapentaenoate + oxidized [NADPH--hemoprotein reductase] + H2O + H(+). It carries out the reaction all-trans-retinol + reduced [NADPH--hemoprotein reductase] + O2 = all-trans-retinal + oxidized [NADPH--hemoprotein reductase] + 2 H2O + H(+). The enzyme catalyses all-trans-retinal + reduced [NADPH--hemoprotein reductase] + O2 = all-trans-retinoate + oxidized [NADPH--hemoprotein reductase] + H2O + 2 H(+). It catalyses the reaction (13S)-hydroperoxy-(9Z,11E)-octadecadienoate = 13-oxo-(9Z,11E)-octadecadienoate + H2O. The catalysed reaction is (12S)-hydroperoxy-(5Z,8Z,10E,14Z)-eicosatetraenoate = 12-oxo-(5Z,8Z,10E,14Z)-eicosatetraenoate + H2O. It carries out the reaction (15S)-hydroperoxy-(5Z,8Z,11Z,13E)-eicosatetraenoate = 15-oxo-(5Z,8Z,11Z,13E)-eicosatetraenoate + H2O. The enzyme catalyses (5S)-hydroperoxy-(6E,8Z,11Z,14Z)-eicosatetraenoate = 5-oxo-(6E,8Z,11Z,14Z)-eicosatetraenoate + H2O. It participates in steroid hormone biosynthesis. It functions in the pathway lipid metabolism; fatty acid metabolism. The protein operates within cofactor metabolism; retinol metabolism. Functionally, a cytochrome P450 monooxygenase involved in the metabolism of various endogenous substrates, including fatty acids, steroid hormones and vitamins. Mechanistically, uses molecular oxygen inserting one oxygen atom into a substrate, and reducing the second into a water molecule, with two electrons provided by NADPH via cytochrome P450 reductase (CPR; NADPH-ferrihemoprotein reductase). Catalyzes the hydroxylation of carbon-hydrogen bonds. Exhibits high catalytic activity for the formation of hydroxyestrogens from estrone (E1) and 17beta-estradiol (E2), namely 2-hydroxy E1 and E2, as well as D-ring hydroxylated E1 and E2 at the C15alpha and C16alpha positions. Displays different regioselectivities for polyunsaturated fatty acids (PUFA) hydroxylation. Catalyzes the epoxidation of double bonds of certain PUFA. Converts arachidonic acid toward epoxyeicosatrienoic acid (EET) regioisomers, 8,9-, 11,12-, and 14,15-EET, that function as lipid mediators in the vascular system. Displays an absolute stereoselectivity in the epoxidation of eicosapentaenoic acid (EPA) producing the 17(R),18(S) enantiomer. May play an important role in all-trans retinoic acid biosynthesis in extrahepatic tissues. Catalyzes two successive oxidative transformation of all-trans retinol to all-trans retinal and then to the active form all-trans retinoic acid. May also participate in eicosanoids metabolism by converting hydroperoxide species into oxo metabolites (lipoxygenase-like reaction, NADPH-independent). This chain is Cytochrome P450 1A1 (CYP1A1), found in Macaca mulatta (Rhesus macaque).